A 159-amino-acid chain; its full sequence is Putative 2'-deoxynucleoside 5'-phosphate N-hydrolase 1 (159 aa).

Substrate-binding positions include 25–31, Tyr40, His58, Glu104, and 126–128; these read FLSGSIR and SAM.

Belongs to the 2'-deoxynucleoside 5'-phosphate N-hydrolase 1 family. In terms of assembly, monomer and homodimer.

It carries out the reaction a pyrimidine 2'-deoxyribonucleoside 5'-phosphate + H2O = a pyrimidine nucleobase + 2-deoxy-D-ribose 5-phosphate. The enzyme catalyses a purine 2'-deoxyribonucleoside 5'-phosphate + H2O = a purine nucleobase + 2-deoxy-D-ribose 5-phosphate. Catalyzes the cleavage of the N-glycosidic bond of deoxyribonucleoside 5'-monophosphates to yield deoxyribose 5-phosphate and a purine or pyrimidine base. This is Putative 2'-deoxynucleoside 5'-phosphate N-hydrolase 1 from Methanosarcina barkeri (strain Fusaro / DSM 804).